Consider the following 317-residue polypeptide: Polysulfide reductase chain C (317 aa).

The next 8 membrane-spanning stretches (helical) occupy residues 20–40 (IAVY…AIII), 54–75 (IIKA…LLIF), 98–118 (LGVL…LGVF), 147–167 (IVTF…LSAM), 182–202 (FLAS…LLFF), 221–237 (VILF…VGMY), 259–279 (LFWL…NVAL), and 289–309 (FVML…FYIL).

This sequence belongs to the NrfD family. In terms of assembly, functional polysulfide reductase is made up of three different (A, B, and C) subunits.

The protein resides in the cell inner membrane. In terms of biological role, could possibly serve as the membrane anchor of the enzyme. Component of the phosphorylative electron transport system with polysulfide as the terminal acceptor. The polypeptide is Polysulfide reductase chain C (psrC) (Wolinella succinogenes (strain ATCC 29543 / DSM 1740 / CCUG 13145 / JCM 31913 / LMG 7466 / NCTC 11488 / FDC 602W) (Vibrio succinogenes)).